Reading from the N-terminus, the 123-residue chain is Putative EG45-like domain containing protein 1 (123 aa).

A signal peptide spans 1-21; sequence MSKSIVFFSTVLVFLFSFSYA. The region spanning 24-123 is the Expansin-like EG45 domain; that stretch reads GIATFYTSYT…AGIINIDYFP (100 aa).

The protein localises to the secreted. Functionally, might have a systemic role in water and solute homeostasis. The protein is Putative EG45-like domain containing protein 1 (EGC1) of Arabidopsis thaliana (Mouse-ear cress).